Reading from the N-terminus, the 401-residue chain is tRNA-specific 2-thiouridylase MnmA (401 aa).

ATP-binding positions include 13–20 and methionine 39; that span reads GLSGGVDS. The interval 99–101 is interaction with target base in tRNA; sequence NPD. Cysteine 104 (nucleophile) is an active-site residue. A disulfide bridge connects residues cysteine 104 and cysteine 202. Glycine 128 provides a ligand contact to ATP. The segment at 152–154 is interaction with tRNA; that stretch reads KDQ. Residue cysteine 202 is the Cysteine persulfide intermediate of the active site. The interaction with tRNA stretch occupies residues 329–330; sequence RY.

The protein belongs to the MnmA/TRMU family.

It is found in the cytoplasm. The enzyme catalyses S-sulfanyl-L-cysteinyl-[protein] + uridine(34) in tRNA + AH2 + ATP = 2-thiouridine(34) in tRNA + L-cysteinyl-[protein] + A + AMP + diphosphate + H(+). In terms of biological role, catalyzes the 2-thiolation of uridine at the wobble position (U34) of tRNA, leading to the formation of s(2)U34. The sequence is that of tRNA-specific 2-thiouridylase MnmA from Polaromonas sp. (strain JS666 / ATCC BAA-500).